A 360-amino-acid chain; its full sequence is Phosphoserine aminotransferase (360 aa).

R42 provides a ligand contact to L-glutamate. Residues 76-77, W102, T153, D172, and Q195 each bind pyridoxal 5'-phosphate; that span reads AR. The residue at position 196 (K196) is an N6-(pyridoxal phosphate)lysine. 237-238 is a pyridoxal 5'-phosphate binding site; the sequence is NT.

Belongs to the class-V pyridoxal-phosphate-dependent aminotransferase family. SerC subfamily. In terms of assembly, homodimer. The cofactor is pyridoxal 5'-phosphate.

It is found in the cytoplasm. The enzyme catalyses O-phospho-L-serine + 2-oxoglutarate = 3-phosphooxypyruvate + L-glutamate. It carries out the reaction 4-(phosphooxy)-L-threonine + 2-oxoglutarate = (R)-3-hydroxy-2-oxo-4-phosphooxybutanoate + L-glutamate. Its pathway is amino-acid biosynthesis; L-serine biosynthesis; L-serine from 3-phospho-D-glycerate: step 2/3. It participates in cofactor biosynthesis; pyridoxine 5'-phosphate biosynthesis; pyridoxine 5'-phosphate from D-erythrose 4-phosphate: step 3/5. Catalyzes the reversible conversion of 3-phosphohydroxypyruvate to phosphoserine and of 3-hydroxy-2-oxo-4-phosphonooxybutanoate to phosphohydroxythreonine. This is Phosphoserine aminotransferase from Photobacterium profundum (strain SS9).